The primary structure comprises 447 residues: MANVIVIGAQWGDEGKGKITDLLSRSADVVVRYQGGVNAGHTIVVKGQTFKLHLIPSGILYPNTDCIIGCGTVIDPQILIAEIDQLKELNISTDHLLISETAHVTMPYHRLIDQASEERRGSYKIGTTGRGIGPTYADKSERTGIRVLDLMDPDGLREQLEWTINYKNVILEKLYNLPPLDPQEVIEQYLGYAERLRPHVVDTSLKISDAIQRRRNILFEGAQGTLLDLDHGTYPYVTSSNPVAGGACVGTGVGPTMIDRVIGVSKAYTTRVGEGPFPTELDGELGELLCDRGAEFGTTTGRKRRCGWFDAVIGRYAVRINGMDCMALTKLDVLDELEEIQVCVAYDIDGQRSEHFPTSSRQFARCRPIYKTLPGWKVSTTECRTLEDLPQQALDYLKFLAELMEVPIAIVSLGASRDQTIIVEDPIHGPKRALLHPDGTPATLLSA.

GTP contacts are provided by residues Gly12–Lys18 and Gly40–Thr42. Residue Asp13 is the Proton acceptor of the active site. The Mg(2+) site is built by Asp13 and Gly40. Residues Asp13–Lys16, Asn38–His41, Thr128, Arg142, Gln223, Thr238, and Arg302 contribute to the IMP site. The active-site Proton donor is His41. Thr298 to Arg304 lines the substrate pocket. GTP contacts are provided by residues Arg304, Lys330–Asp332, and Ser412–Gly414.

The protein belongs to the adenylosuccinate synthetase family. Homodimer. It depends on Mg(2+) as a cofactor.

Its subcellular location is the cytoplasm. The catalysed reaction is IMP + L-aspartate + GTP = N(6)-(1,2-dicarboxyethyl)-AMP + GDP + phosphate + 2 H(+). It functions in the pathway purine metabolism; AMP biosynthesis via de novo pathway; AMP from IMP: step 1/2. In terms of biological role, plays an important role in the de novo pathway of purine nucleotide biosynthesis. Catalyzes the first committed step in the biosynthesis of AMP from IMP. The sequence is that of Adenylosuccinate synthetase from Nostoc punctiforme (strain ATCC 29133 / PCC 73102).